The sequence spans 530 residues: Glutamyl-tRNA reductase 2, chloroplastic (530 aa).

Residues 1 to 64 (MAVSSAFVVT…RCEISPSNKA (64 aa)) constitute a chloroplast transit peptide. Substrate-binding positions include 134 to 137 (TCNR), S194, 199 to 201 (EGQ), and Q205. The Nucleophile role is filled by C135. 277 to 282 (GAGKMG) serves as a coordination point for NADP(+).

It belongs to the glutamyl-tRNA reductase family. As to expression, expressed in roots and flowers. Detected in leaves, hypocotyls and cotyledons.

It localises to the plastid. It is found in the chloroplast. The enzyme catalyses (S)-4-amino-5-oxopentanoate + tRNA(Glu) + NADP(+) = L-glutamyl-tRNA(Glu) + NADPH + H(+). It functions in the pathway porphyrin-containing compound metabolism; protoporphyrin-IX biosynthesis; 5-aminolevulinate from L-glutamyl-tRNA(Glu): step 1/2. The protein operates within porphyrin-containing compound metabolism; chlorophyll biosynthesis. Catalyzes the NADPH-dependent reduction of glutamyl-tRNA(Glu) to glutamate 1-semialdehyde (GSA). Probably involved in wound-induced supply of heme to defensive hemoproteins outside plastids. The polypeptide is Glutamyl-tRNA reductase 2, chloroplastic (HEMA2) (Arabidopsis thaliana (Mouse-ear cress)).